The following is a 229-amino-acid chain: Secretory carrier-associated membrane protein 4 (229 aa).

Residues 1 to 39 (MSEKENNFPPLPKFIPVKPCFYQNFSDEIPVEHQVLVKR) are Cytoplasmic-facing. The next 4 membrane-spanning stretches (helical) occupy residues 40–60 (IYRL…ACLA), 61–81 (WWIG…LLLF), 105–125 (FMAF…QAIG), and 149–169 (VVML…AIAI). The Cytoplasmic portion of the chain corresponds to 170–229 (MKVHRIYRGAGGSFQKAQTEWNTGTWRNPPSREAQYNNFSGNSLPEYPTVPSYPGSGQWP). The residue at position 194 (Thr194) is a Phosphothreonine. Residues 208 to 229 (FSGNSLPEYPTVPSYPGSGQWP) are disordered.

Belongs to the SCAMP family.

It localises to the membrane. Its function is as follows. Probably involved in membrane protein trafficking. In Homo sapiens (Human), this protein is Secretory carrier-associated membrane protein 4 (SCAMP4).